The chain runs to 245 residues: Fibroblast growth factor 13 (245 aa).

2 disordered regions span residues 1 to 37 (MAAAIASSLIRQKRQAREREKSNACKCVSSPSKSKGN) and 213 to 245 (TEFSRSGSGTPTKSRSVSGVLNGGKSMSQNDST). Residues 1 to 62 (MAAAIASSLI…GSKKRRRRRP (62 aa)) are mediates targeting to the nucleus. Polar residues predominate over residues 215 to 245 (FSRSGSGTPTKSRSVSGVLNGGKSMSQNDST).

The protein belongs to the heparin-binding growth factors family.

The protein resides in the cell projection. It localises to the filopodium. Its subcellular location is the growth cone. It is found in the dendrite. The protein localises to the cell membrane. The protein resides in the sarcolemma. It localises to the cytoplasm. Its function is as follows. Microtubule-binding protein which directly binds tubulin and is involved in both polymerization and stabilization of microtubules. Through its action on microtubules, may participate in the refinement of axons by negatively regulating axonal and leading processes branching. Plays a crucial role in neuron polarization and migration. Regulates voltage-gated sodium channel transport and function. Required for proper head development, it is involved in neural differentiation through regulation of the mek5-erk5 pathway. This Xenopus laevis (African clawed frog) protein is Fibroblast growth factor 13 (fgf13).